The chain runs to 147 residues: Large ribosomal subunit protein uL11 (147 aa).

The protein belongs to the universal ribosomal protein uL11 family. In terms of assembly, part of the ribosomal stalk of the 50S ribosomal subunit. Interacts with L10 and the large rRNA to form the base of the stalk. L10 forms an elongated spine to which L12 dimers bind in a sequential fashion forming a multimeric L10(L12)X complex. Post-translationally, one or more lysine residues are methylated.

Its function is as follows. Forms part of the ribosomal stalk which helps the ribosome interact with GTP-bound translation factors. The chain is Large ribosomal subunit protein uL11 from Thermus thermophilus (strain ATCC BAA-163 / DSM 7039 / HB27).